The following is a 98-amino-acid chain: MSLTYMNMFMAFTISLLGLLMYRSHMMSSLLCLEGMMLSLFVMMTMVILNTHLTLASMIPIILLVFAACEAALGLSLLVMVSTTYGMDYVQNLNLLQC.

Helical transmembrane passes span 1–21, 29–49, and 61–81; these read MSLT…GLLM, SLLC…MVIL, and IILL…LVMV.

It belongs to the complex I subunit 4L family. Core subunit of respiratory chain NADH dehydrogenase (Complex I) which is composed of 45 different subunits.

It is found in the mitochondrion inner membrane. It catalyses the reaction a ubiquinone + NADH + 5 H(+)(in) = a ubiquinol + NAD(+) + 4 H(+)(out). Functionally, core subunit of the mitochondrial membrane respiratory chain NADH dehydrogenase (Complex I) which catalyzes electron transfer from NADH through the respiratory chain, using ubiquinone as an electron acceptor. Part of the enzyme membrane arm which is embedded in the lipid bilayer and involved in proton translocation. In Vampyressa thyone (Northern little yellow-eared bat), this protein is NADH-ubiquinone oxidoreductase chain 4L (MT-ND4L).